Consider the following 151-residue polypeptide: Deoxyuridine 5'-triphosphate nucleotidohydrolase (151 aa).

Residues Arg-70–Gly-72, Asn-83, Leu-87–Asp-89, and Met-97 contribute to the substrate site.

Belongs to the dUTPase family. Mg(2+) is required as a cofactor.

It carries out the reaction dUTP + H2O = dUMP + diphosphate + H(+). Its pathway is pyrimidine metabolism; dUMP biosynthesis; dUMP from dCTP (dUTP route): step 2/2. Its function is as follows. This enzyme is involved in nucleotide metabolism: it produces dUMP, the immediate precursor of thymidine nucleotides and it decreases the intracellular concentration of dUTP so that uracil cannot be incorporated into DNA. The chain is Deoxyuridine 5'-triphosphate nucleotidohydrolase from Pseudomonas aeruginosa (strain LESB58).